A 306-amino-acid chain; its full sequence is Polyphosphate kinase PPK2B (306 aa).

This sequence belongs to the polyphosphate kinase 2 (PPK2) family. Class I subfamily. In terms of assembly, homotetramer. The cofactor is Mn(2+).

The catalysed reaction is [phosphate](n) + ATP = [phosphate](n+1) + ADP. The enzyme catalyses [phosphate](n) + GTP = [phosphate](n+1) + GDP. Catalyzes the synthesis of polyP from ATP or GTP. Can also use inorganic polyphosphate (polyP) as a donor to convert ADP to ATP, but the activity is 10-fold higher in vitro for polyP synthesis than for ATP formation. The protein is Polyphosphate kinase PPK2B of Corynebacterium glutamicum (strain ATCC 13032 / DSM 20300 / JCM 1318 / BCRC 11384 / CCUG 27702 / LMG 3730 / NBRC 12168 / NCIMB 10025 / NRRL B-2784 / 534).